The primary structure comprises 333 residues: Dioxygenase cnsJ (333 aa).

Residues His153, Asp155, and His235 each contribute to the Fe cation site. The segment at 309–333 (NAQPEGEDDGGMKPNEGEHVVEAQI) is disordered. The span at 323–333 (NEGEHVVEAQI) shows a compositional bias: basic and acidic residues.

This sequence belongs to the PhyH family. As to quaternary structure, homodimer. The cofactor is Fe cation.

It participates in alkaloid biosynthesis. Functionally, dioxygenase; part of the gene cluster that mediates the biosynthesis of communesins, a prominent class of indole alkaloids with great potential as pharmaceuticals. Communesins are biosynthesized by the coupling of tryptamine and aurantioclavine, two building blocks derived from L-tryptophan. The L-tryptophan decarboxylase cnsB converts L-tryptophan to tryptamine, whereas the tryptophan dimethylallyltransferase cnsF converts L-tryptophan to 4-dimethylallyl tryptophan which is further transformed to aurantioclavine by the aurantioclavine synthase cnsA, probably aided by the catalase cnsD. The cytochrome P450 monooxygenase cnsC catalyzes the heterodimeric coupling between the two different indole moieties, tryptamine and aurantioclavine, to construct vicinal quaternary stereocenters and yield the heptacyclic communesin scaffold. The O-methyltransferase cnsE then methylates the communesin scaffold to produce communesin K, the simplest characterized communesin that contains the heptacyclic core. The dioxygenase cnsJ converts communesin K into communesin I. Acylation to introduce the hexadienyl group at position N16 of communesin I by the acyltransferase cnsK leads to the production of communesin B. The hexadienyl group is produced by the highly reducing polyketide synthase cnsI, before being hydrolytically removed from cnsI by the serine hydrolase cnsH, converted into hexadienyl-CoA by the CoA ligase cnsG, and then transferred to communesin I by cnsK. Surprisingly, cnsK may also be a promiscuous acyltransferase that can tolerate a range of acyl groups, including acetyl-, propionyl-, and butyryl-CoA, which lead to communesins A, G and H respectively. The roles of the alpha-ketoglutarate-dependent dioxygenases cnsM and cnsP have still to be determined. This Penicillium expansum (Blue mold rot fungus) protein is Dioxygenase cnsJ.